The chain runs to 251 residues: Malonyl-[acyl-carrier protein] O-methyltransferase (251 aa).

This sequence belongs to the methyltransferase superfamily.

The catalysed reaction is malonyl-[ACP] + S-adenosyl-L-methionine = malonyl-[ACP] methyl ester + S-adenosyl-L-homocysteine. Its pathway is cofactor biosynthesis; biotin biosynthesis. In terms of biological role, converts the free carboxyl group of a malonyl-thioester to its methyl ester by transfer of a methyl group from S-adenosyl-L-methionine (SAM). It allows to synthesize pimeloyl-ACP via the fatty acid synthetic pathway. The polypeptide is Malonyl-[acyl-carrier protein] O-methyltransferase (Erwinia billingiae (strain Eb661)).